The sequence spans 717 residues: Polyribonucleotide nucleotidyltransferase (717 aa).

2 residues coordinate Mg(2+): D486 and D492. Positions 553 to 612 constitute a KH domain; the sequence is PRMITVKINPEKIRDVIGKGGSTIQALTKETGCTIDIQEDGTITIASTSSEGMAEAKRRI. Residues 622 to 690 enclose the S1 motif domain; sequence GKIYSGTVLK…EKGRMRLSIK (69 aa). A disordered region spans residues 690 to 717; the sequence is KAAKAEEGDVPATAPQAPGAGDATSQQQ.

The protein belongs to the polyribonucleotide nucleotidyltransferase family. It depends on Mg(2+) as a cofactor.

The protein resides in the cytoplasm. It carries out the reaction RNA(n+1) + phosphate = RNA(n) + a ribonucleoside 5'-diphosphate. Its function is as follows. Involved in mRNA degradation. Catalyzes the phosphorolysis of single-stranded polyribonucleotides processively in the 3'- to 5'-direction. The sequence is that of Polyribonucleotide nucleotidyltransferase from Ralstonia nicotianae (strain ATCC BAA-1114 / GMI1000) (Ralstonia solanacearum).